Consider the following 389-residue polypeptide: Gustatory receptor 68a (389 aa).

The Cytoplasmic segment spans residues 1–42 (MKIYQDIYPISKPSQIFAILPFYSGDVDDGFRFGGLGRWYGR). A helical membrane pass occupies residues 43-63 (LVALIILIGSLTLGEDVLFAS). At 64–82 (KEYRLVASAQGDTEEINRT) the chain is on the extracellular side. Asparagine 80 carries N-linked (GlcNAc...) asparagine glycosylation. The helical transmembrane segment at 83 to 103 (IETLLCIISYTMVVLSSVQNA) threads the bilayer. Over 104 to 133 (SRHFRTLHDIAKIDEYLLANGFRETYSCRN) the chain is Cytoplasmic. A helical membrane pass occupies residues 134 to 154 (LTILVTSAAGGVLAVAFYYIH). The Extracellular segment spans residues 155–164 (YRSGIGAKRQ). A helical membrane pass occupies residues 165–185 (IILLLIYFLQLLYSTLLALYL). Over 186–236 (RTLMMNLAQRIGFLNQKLDTFNLQDCGHMENWRELSNLIEVLCKFRYITEN) the chain is Cytoplasmic. A helical membrane pass occupies residues 237–257 (INCVAGVSLLFYFGFSFYTVT). An N-linked (GlcNAc...) asparagine glycan is attached at asparagine 258. Over 258–281 (NQSYLAFATLTAGSLSSKTEVADT) the chain is Extracellular. Residues 282-302 (IGLSCIWVLAETITMIVICSA) traverse the membrane as a helical segment. Over 303–352 (CDGLASEVNGTAQILARIYGKSKQFQNLIDKFLTKSIKQDLQFTAYGFFS) the chain is Cytoplasmic. Residues 353 to 373 (IDNSTLFKIFSAVTTYLVILI) traverse the membrane as a helical segment. Topologically, residues 374 to 389 (QFKQLEDSKVEDISQA) are extracellular.

The protein belongs to the insect chemoreceptor superfamily. Gustatory receptor (GR) family. Gr21a subfamily. In terms of tissue distribution, expressed in chemosensory neurons of about 20 male-specific gustatory bristles in the forelegs. No expression is seen in the mechanosensory neurons. In larvae, expressed in the ventral pharyngeal sense organ.

It localises to the cell membrane. Dsx-dependent essential component of pheromone-driven courtship behavior. Recognizes a female pheromone involved in the second step (tapping step) of the courtship display which is essential for efficient execution of the entire courtship sequence and timely mating. Required for detection of the male sex pheromone CH503 which is transferred from males to females during mating and inhibits courtship behavior by other males. Gr68a-expressing neurons in the male foreleg relay signals to the suboesophageal zone (SEZ) and courtship suppression is mediated by the release of the neuropeptide tachykinin from a cluster of 8-10 neurons in the SEZ. This is Gustatory receptor 68a (Gr68a) from Drosophila melanogaster (Fruit fly).